The chain runs to 885 residues: Alanine--tRNA ligase (885 aa).

4 residues coordinate Zn(2+): His-563, His-567, Cys-677, and His-681. The segment at 848 to 868 (LGGKGGGGRPDRAQGGAPSLA) is disordered.

Belongs to the class-II aminoacyl-tRNA synthetase family. The cofactor is Zn(2+).

The protein localises to the cytoplasm. The enzyme catalyses tRNA(Ala) + L-alanine + ATP = L-alanyl-tRNA(Ala) + AMP + diphosphate. In terms of biological role, catalyzes the attachment of alanine to tRNA(Ala) in a two-step reaction: alanine is first activated by ATP to form Ala-AMP and then transferred to the acceptor end of tRNA(Ala). Also edits incorrectly charged Ser-tRNA(Ala) and Gly-tRNA(Ala) via its editing domain. This chain is Alanine--tRNA ligase, found in Paracoccus denitrificans (strain Pd 1222).